We begin with the raw amino-acid sequence, 205 residues long: Small ribosomal subunit protein uS4 (205 aa).

The segment covering 1–16 has biased composition (basic and acidic residues); the sequence is MSKRESSKYKIDRRMG. The tract at residues 1-46 is disordered; it reads MSKRESSKYKIDRRMGENIWGRPKSPVNRREYGPGQHGQRRKSKLS. The region spanning 94–157 is the S4 RNA-binding domain; it reads SRLDAIVYRA…KQLVTVLEAV (64 aa).

The protein belongs to the universal ribosomal protein uS4 family. As to quaternary structure, part of the 30S ribosomal subunit. Contacts protein S5. The interaction surface between S4 and S5 is involved in control of translational fidelity.

Functionally, one of the primary rRNA binding proteins, it binds directly to 16S rRNA where it nucleates assembly of the body of the 30S subunit. In terms of biological role, with S5 and S12 plays an important role in translational accuracy. This Sinorhizobium medicae (strain WSM419) (Ensifer medicae) protein is Small ribosomal subunit protein uS4.